Reading from the N-terminus, the 470-residue chain is Membrane-bound lytic murein transglycosylase F (470 aa).

The first 24 residues, 1–24 (MPSLKTKGAAGKFASLLLVLALSA), serve as a signal peptide directing secretion. A non-LT domain region spans residues 25–262 (CSRPAPPPET…RALERYFGHV (238 aa)). The tract at residues 263–470 (KRLGSSDILG…RGEDGLPPPG (208 aa)) is LT domain. Glutamate 309 is a catalytic residue.

This sequence in the N-terminal section; belongs to the bacterial solute-binding protein 3 family. It in the C-terminal section; belongs to the transglycosylase Slt family.

Its subcellular location is the cell outer membrane. The enzyme catalyses Exolytic cleavage of the (1-&gt;4)-beta-glycosidic linkage between N-acetylmuramic acid (MurNAc) and N-acetylglucosamine (GlcNAc) residues in peptidoglycan, from either the reducing or the non-reducing ends of the peptidoglycan chains, with concomitant formation of a 1,6-anhydrobond in the MurNAc residue.. Its function is as follows. Murein-degrading enzyme that degrades murein glycan strands and insoluble, high-molecular weight murein sacculi, with the concomitant formation of a 1,6-anhydromuramoyl product. Lytic transglycosylases (LTs) play an integral role in the metabolism of the peptidoglycan (PG) sacculus. Their lytic action creates space within the PG sacculus to allow for its expansion as well as for the insertion of various structures such as secretion systems and flagella. This chain is Membrane-bound lytic murein transglycosylase F, found in Thiobacillus denitrificans (strain ATCC 25259 / T1).